The chain runs to 219 residues: Cytochrome c oxidase assembly protein CtaG (219 aa).

Residues 1–13 (MDATDQGKSTSTT) are compositionally biased toward polar residues. Positions 1–24 (MDATDQGKSTSTTAAQAAPGKAAP) are disordered. Topologically, residues 1 to 29 (MDATDQGKSTSTTAAQAAPGKAAPRRGIG) are cytoplasmic. Low complexity predominate over residues 14-24 (AAQAAPGKAAP). A helical; Signal-anchor for type II membrane protein membrane pass occupies residues 30 to 52 (RDALVGGICGAVVVLMIGASYAA). Residues 53 to 219 (VPFYNWFCRA…GEPDKPRGSL (167 aa)) lie on the Periplasmic side of the membrane.

Belongs to the COX11/CtaG family.

The protein localises to the cell inner membrane. Functionally, exerts its effect at some terminal stage of cytochrome c oxidase synthesis, probably by being involved in the insertion of the copper B into subunit I. This Bradyrhizobium sp. (strain ORS 278) protein is Cytochrome c oxidase assembly protein CtaG.